The following is a 79-amino-acid chain: Sulfur carrier protein TusA (79 aa).

Catalysis depends on Cys17, which acts as the Cysteine persulfide intermediate.

This sequence belongs to the sulfur carrier protein TusA family.

It localises to the cytoplasm. Functionally, sulfur carrier protein which probably makes part of a sulfur-relay system. The chain is Sulfur carrier protein TusA from Mannheimia succiniciproducens (strain KCTC 0769BP / MBEL55E).